Reading from the N-terminus, the 275-residue chain is 2-C-methyl-D-erythritol 4-phosphate cytidylyltransferase (275 aa).

This sequence belongs to the IspD/TarI cytidylyltransferase family. IspD subfamily.

It carries out the reaction 2-C-methyl-D-erythritol 4-phosphate + CTP + H(+) = 4-CDP-2-C-methyl-D-erythritol + diphosphate. Its pathway is isoprenoid biosynthesis; isopentenyl diphosphate biosynthesis via DXP pathway; isopentenyl diphosphate from 1-deoxy-D-xylulose 5-phosphate: step 2/6. In terms of biological role, catalyzes the formation of 4-diphosphocytidyl-2-C-methyl-D-erythritol from CTP and 2-C-methyl-D-erythritol 4-phosphate (MEP). This is 2-C-methyl-D-erythritol 4-phosphate cytidylyltransferase from Corynebacterium jeikeium (strain K411).